We begin with the raw amino-acid sequence, 427 residues long: MTEAMKITLSTQPADARWGEKATYSINNDGITLHLNGADDLGLIQRAARKIDGLGIKHVQLSGEGWDADRCWAFWQGYKAPKGTRKVEWPDLDDAQRQELDNRLMIIDWVRDTINAPAEELGPSQLAQRAVDLISNVAGDRVTYRITKGEDLREQGYMGLHTVGRGSERSPVLLALDYNPTGDKEAPVYACLVGKGITFDSGGYSIKQTAFMDSMKSDMGGAATVTGALAFAITRGLNKRVKLFLCCADNLISGNAFKLGDIITYRNGKKVEVMNTDAEGRLVLADGLIDASAQKPELIIDAATLTGAAKTALGNDYHALFSFDDALAGRLLASASQENEPFWRLPLAEFHRSQLPSNFAELNNTGSAAYPAGASTAAGFLSHFVENYQQGWLHIDCSATYRKAPVEQWSAGATGLGVRTIANLLTA.

Positions 195 and 200 each coordinate Mn(2+). Lysine 207 is an active-site residue. 3 residues coordinate Mn(2+): aspartate 218, aspartate 277, and glutamate 279. Arginine 281 is a catalytic residue.

Belongs to the peptidase M17 family. As to quaternary structure, homohexamer. The cofactor is Mn(2+).

The protein resides in the cytoplasm. It catalyses the reaction Release of an N-terminal amino acid, Xaa, from a peptide or arylamide. Xaa is preferably Glu or Asp but may be other amino acids, including Leu, Met, His, Cys and Gln.. Its function is as follows. Probably plays an important role in intracellular peptide degradation. The polypeptide is Peptidase B (Escherichia coli O139:H28 (strain E24377A / ETEC)).